The primary structure comprises 467 residues: ESX-4 secretion system protein eccD4 (467 aa).

Transmembrane regions (helical) follow at residues 122–142, 152–172, 186–206, 209–229, 241–261, 264–284, 319–339, 344–364, 374–394, 401–421, and 439–459; these read GALA…RNAL, ATAG…VIAC, VIAT…VPGV, VLVA…ITGC, AVVV…VPAI, LATL…VLLA, LTSL…GTAV, IHRS…LLLL, SLVF…VAAD, PWIA…GFVA, and CLAL…YSAV.

Belongs to the EccD/Snm4 family. Part of the ESX-4 / type VII secretion system (T7SS), which is composed of cytosolic and membrane components.

The protein resides in the cell membrane. The sequence is that of ESX-4 secretion system protein eccD4 (eccD4) from Mycobacterium tuberculosis (strain CDC 1551 / Oshkosh).